Reading from the N-terminus, the 719-residue chain is Glutathionylspermidine synthase (719 aa).

One can recognise a Peptidase C51 domain in the interval 54–200 (CLPLSSFERK…TESGEVELLD (147 aa)). Arg-350 contacts glutathione. 350–352 (RFD) contacts ATP. 3 residues coordinate Mg(2+): Asp-352, Glu-364, and Asn-366. Ser-369 lines the glutathione pocket. Glu-432 contacts spermidine. Residues Glu-433 and Thr-501 each contribute to the glutathione site. ATP-binding positions include Lys-544, Lys-579, Gly-586, Gln-653, and 689–691 (KIT).

This sequence in the C-terminal section; belongs to the glutathionylspermidine synthase preATP-grasp family. The cofactor is Mg(2+). Post-translationally, the N-terminus is blocked.

It catalyses the reaction spermidine + glutathione + ATP = glutathionylspermidine + ADP + phosphate + H(+). In terms of biological role, conjugates glutathione (gamma-Glu-Cys-Gly) and spermidine to form glutathionylspermidine in the biosynthesis trypanothione (N(1),N(8)-bis(glutathionyl)spermidine), which is involved in maintaining intracellular thiol redox and in defense against oxidants. In Crithidia fasciculata, this protein is Glutathionylspermidine synthase (GSP).